We begin with the raw amino-acid sequence, 254 residues long: Putative epimerase LsrE (254 aa).

The chain crosses the membrane as a helical span at residues 14 to 34 (VALLASYPLSVGILAGQWIAL). A divalent metal cation-binding residues include histidine 50, aspartate 52, and histidine 81. Aspartate 52 (proton acceptor) is an active-site residue. Substrate contacts are provided by residues histidine 81, 166–169 (GYGS), 199–201 (DGS), and 221–222 (GS). Aspartate 199 contacts a divalent metal cation. The Proton donor role is filled by aspartate 199.

It belongs to the ribulose-phosphate 3-epimerase family. A divalent metal cation is required as a cofactor.

The protein resides in the cell membrane. The sequence is that of Putative epimerase LsrE (lsrE) from Salmonella typhi.